Reading from the N-terminus, the 446-residue chain is Regulator of drug sensitivity 2 (446 aa).

The segment at residues 15 to 45 (KTCLFCKRSHVVCDKQRPCSRCVKRDIAHLC) is a DNA-binding region (zn(2)-C6 fungal-type). Disordered regions lie at residues 52-106 (VPNE…PKLD) and 158-218 (ASNV…KEES). Composition is skewed to polar residues over residues 56-70 (MPSQ…NNIQ) and 84-96 (DYQN…SGST). Serine 102 carries the post-translational modification Phosphoserine. The span at 160-177 (NVHLENGSQTTQSPLEYQ) shows a compositional bias: polar residues. The span at 178–192 (NDNRRDEIGVARQEN) shows a compositional bias: basic and acidic residues. The span at 193–206 (RSPTIMSGSSNSIS) shows a compositional bias: polar residues. Residues 207–218 (KGDKQDQEKEES) show a composition bias toward basic and acidic residues. Residue threonine 231 is modified to Phosphothreonine.

Post-translationally, phosphorylated by SNF1 in absence of glucose. The phosphorylation is required for induction of transcription of gluconeogenic genes.

It is found in the cytoplasm. It localises to the nucleus. Functionally, transcription factor which regulates the expression of genes for gluconeogenesis, the TCA cycle, and glucose metabolism. Involved in the cell wall remodeling process and drug resistance. In Saccharomyces cerevisiae (strain ATCC 204508 / S288c) (Baker's yeast), this protein is Regulator of drug sensitivity 2 (RDS2).